A 62-amino-acid polypeptide reads, in one-letter code: Bacteriocin lactacin-F subunit LafX (62 aa).

The propeptide occupies 1–14 (MKLNDKELSKIVGG).

Belongs to the bacteriocin class IIB family. In terms of assembly, this bacteriocin depends upon the complementation of two peptides for activity: LafA and LafX. Associated with a 180 kDa bacteriocin complex.

Its function is as follows. Heat stable bacteriocin active against Enterococcus faecalis and other Lactobacilli. In Lactobacillus johnsonii (strain CNCM I-12250 / La1 / NCC 533), this protein is Bacteriocin lactacin-F subunit LafX (lafX).